The primary structure comprises 408 residues: Ribonuclease T2-like (408 aa).

The signal sequence occupies residues 1-25 (MLQSIPGPQHILKALTGSLGLSTIF). Cystine bridges form between Cys38/Cys56, Cys45/Cys92, Cys55/Cys158, and Cys100/Cys150. His85 is a catalytic residue. Asn108 is a glycosylation site (N-linked (GlcNAc...) asparagine). Active-site residues include Glu143 and His147. Asn173 carries an N-linked (GlcNAc...) asparagine glycan. An intrachain disulfide couples Cys222 to Cys257. A disordered region spans residues 268-292 (KHREPSRTTDTPSQPTTTGTPFKGR). Residues 275-288 (TTDTPSQPTTTGTP) are compositionally biased toward low complexity. N-linked (GlcNAc...) asparagine glycosylation is present at Asn372.

The protein belongs to the RNase T2 family.

Its subcellular location is the vacuole lumen. The protein resides in the cytoplasm. It carries out the reaction a ribonucleotidyl-ribonucleotide-RNA + H2O = a 3'-end 3'-phospho-ribonucleotide-RNA + a 5'-end dephospho-ribonucleoside-RNA + H(+). Functionally, rnase which modulates cell survival under stress conditions. Released from the vacuole to the cytoplasm during stress to promote tRNA and rRNA cleavage and to activate separately a downstream pathway that promotes cell death. Involved in cell size, vacuolar morphology and growth at high temperatures and high salt concentration. The sequence is that of Ribonuclease T2-like (rny1) from Aspergillus fumigatus (strain ATCC MYA-4609 / CBS 101355 / FGSC A1100 / Af293) (Neosartorya fumigata).